The primary structure comprises 93 residues: YcgL domain-containing protein PSHAb0508 (93 aa).

A YcgL domain is found at 1 to 85 (MLTAVYKSKK…PQENLLSQLR (85 aa)).

This is YcgL domain-containing protein PSHAb0508 from Pseudoalteromonas translucida (strain TAC 125).